A 431-amino-acid chain; its full sequence is 3-phosphoshikimate 1-carboxyvinyltransferase (431 aa).

Residues lysine 22, serine 23, and arginine 27 each contribute to the 3-phosphoshikimate site. Residue lysine 22 participates in phosphoenolpyruvate binding. Phosphoenolpyruvate is bound by residues glycine 94 and arginine 122. 3-phosphoshikimate contacts are provided by serine 167, glutamine 169, aspartate 314, and lysine 341. A phosphoenolpyruvate-binding site is contributed by glutamine 169. Aspartate 314 functions as the Proton acceptor in the catalytic mechanism. Positions 345 and 391 each coordinate phosphoenolpyruvate.

This sequence belongs to the EPSP synthase family. As to quaternary structure, monomer.

The protein resides in the cytoplasm. The enzyme catalyses 3-phosphoshikimate + phosphoenolpyruvate = 5-O-(1-carboxyvinyl)-3-phosphoshikimate + phosphate. The protein operates within metabolic intermediate biosynthesis; chorismate biosynthesis; chorismate from D-erythrose 4-phosphate and phosphoenolpyruvate: step 6/7. Catalyzes the transfer of the enolpyruvyl moiety of phosphoenolpyruvate (PEP) to the 5-hydroxyl of shikimate-3-phosphate (S3P) to produce enolpyruvyl shikimate-3-phosphate and inorganic phosphate. The chain is 3-phosphoshikimate 1-carboxyvinyltransferase from Leuconostoc citreum (strain KM20).